The following is a 535-amino-acid chain: Pentatricopeptide repeat-containing protein At5g16420, mitochondrial (535 aa).

The N-terminal 28 residues, 1 to 28, are a transit peptide targeting the mitochondrion; sequence MFLSRVNPTRFPPFVASRRLFSASASAA. 12 PPR repeats span residues 82–112, 119–153, 154–189, 190–224, 225–259, 260–294, 295–329, 330–364, 365–395, 399–433, 434–468, and 469–503; these read NYDT…LRNS, GENL…GVKR, SVRS…GITP, NIFT…GLVP, NLVT…GWYP, DATT…EIEP, NEVT…SFMP, DSSL…NCMP, DNAL…FEKG, SLLT…KCKP, NAFT…GCFP, and NKTT…GKVD.

The protein belongs to the PPR family. P subfamily.

It localises to the mitochondrion. The chain is Pentatricopeptide repeat-containing protein At5g16420, mitochondrial from Arabidopsis thaliana (Mouse-ear cress).